The primary structure comprises 839 residues: Glycerol-3-phosphate acyltransferase (839 aa).

Positions 309 to 314 match the HXXXXD motif motif; sequence CHRSHI.

It belongs to the GPAT/DAPAT family.

Its subcellular location is the cell inner membrane. It catalyses the reaction sn-glycerol 3-phosphate + an acyl-CoA = a 1-acyl-sn-glycero-3-phosphate + CoA. It participates in phospholipid metabolism; CDP-diacylglycerol biosynthesis; CDP-diacylglycerol from sn-glycerol 3-phosphate: step 1/3. The polypeptide is Glycerol-3-phosphate acyltransferase (Pseudomonas fluorescens (strain SBW25)).